Reading from the N-terminus, the 269-residue chain is Cytochrome c oxidase subunit 3 (269 aa).

A run of 7 helical transmembrane segments spans residues 21–41 (PWPI…GLTM), 45–65 (IVGN…MTMW), 90–110 (GFLL…WAYF), 127–147 (VGIT…ILLA), 167–187 (ALNG…CQYI), 204–224 (VFFA…IMLA), and 247–267 (ILYL…MYWW).

The protein belongs to the cytochrome c oxidase subunit 3 family. Component of the cytochrome c oxidase (complex IV, CIV), a multisubunit enzyme composed of a catalytic core of 3 subunits and several supernumerary subunits. The complex exists as a monomer or a dimer and forms supercomplexes (SCs) in the inner mitochondrial membrane with ubiquinol-cytochrome c oxidoreductase (cytochrome b-c1 complex, complex III, CIII).

It is found in the mitochondrion inner membrane. It carries out the reaction 4 Fe(II)-[cytochrome c] + O2 + 8 H(+)(in) = 4 Fe(III)-[cytochrome c] + 2 H2O + 4 H(+)(out). Its function is as follows. Component of the cytochrome c oxidase, the last enzyme in the mitochondrial electron transport chain which drives oxidative phosphorylation. The respiratory chain contains 3 multisubunit complexes succinate dehydrogenase (complex II, CII), ubiquinol-cytochrome c oxidoreductase (cytochrome b-c1 complex, complex III, CIII) and cytochrome c oxidase (complex IV, CIV), that cooperate to transfer electrons derived from NADH and succinate to molecular oxygen, creating an electrochemical gradient over the inner membrane that drives transmembrane transport and the ATP synthase. Cytochrome c oxidase is the component of the respiratory chain that catalyzes the reduction of oxygen to water. Electrons originating from reduced cytochrome c in the intermembrane space (IMS) are transferred via the dinuclear copper A center (CU(A)) of subunit 2 and heme A of subunit 1 to the active site in subunit 1, a binuclear center (BNC) formed by heme A3 and copper B (CU(B)). The BNC reduces molecular oxygen to 2 water molecules using 4 electrons from cytochrome c in the IMS and 4 protons from the mitochondrial matrix. In Wickerhamomyces canadensis (Yeast), this protein is Cytochrome c oxidase subunit 3 (COX3).